The chain runs to 2176 residues: Nonribosomal peptide synthetase sirP (2176 aa).

Basic and acidic residues predominate over residues 16-31 (EGLTGDDHSPESRRDF). Positions 16–38 (EGLTGDDHSPESRRDFPMSQSSG) are disordered. Residues 51–434 (FERIASQFPE…LGRKDRVVKN (384 aa)) form an adenylation 1 region. The Carrier 1 domain maps to 534–610 (SSPSSNLYVV…RICDTLSATI (77 aa)). Ser-571 carries the O-(pantetheine 4'-phosphoryl)serine modification. A condensation 1 region spans residues 643-1073 (YMTAIQVNMI…MMNQLEINDL (431 aa)). The segment at 1094–1474 (FEEVVDTWPD…GRIDNQVKVR (381 aa)) is adenylation 2. The region spanning 1570–1646 (PIEGTTERII…DLALAIDKHI (77 aa)) is the Carrier 2 domain. Ser-1606 bears the O-(pantetheine 4'-phosphoryl)serine mark. Positions 1661 to 2070 (QNTVLSHLEE…VQLMAAFRYL (410 aa)) are condensation 2. Residues 2106–2176 (QEMIDLVREA…TAELIAGAVE (71 aa)) enclose the Carrier 3 domain. Ser-2140 is modified (O-(pantetheine 4'-phosphoryl)serine).

It belongs to the NRP synthetase family.

Its pathway is mycotoxin biosynthesis. In terms of biological role, nonribosomal peptide synthetase; part of the gene cluster that mediates the biosynthesis of sirodesmin PL, an epipolythiodioxopiperazine (ETP) characterized by a disulfide bridged cyclic dipeptide and that acts as a phytotoxin which is involved in the blackleg didease of canola. SirD catalyzes the O-prenylation of L-tyrosine (L-Tyr) in the presence of dimethylallyl diphosphate (DMAPP) to yield 4-O-dimethylallyl-L-Tyr, and therefore represents probably the first pathway-specific enzyme in the biosynthesis of sirodesmin PL. 4-O-dimethylallyl-L-Tyr, then undergoes condensation with L-Ser in a reaction catalyzed by the non-ribosomal peptide synthase sirP to form the diketopiperazine (DKP) backbone. Further bishydroxylation of the DKP performed by the cytochrome P450 monooxygenase sirC leads to the production of the intermediate phomamide. This step is essential to form the reactive thiol group required for toxicity of sirodesmin PL. The next steps of sirodesmin biosynthesis are not well understood yet, but some predictions could be made from intermediate compounds identification. Phomamide is converted into phomalizarine via oxidation, probably by sirT. Further oxidation, methylation (by sirM or sirN) and reduction steps convert phomalizarine to deacetyl sirodesmin. Finally, acetyltransferase sirH probably acetylates deacetyl sirodesmin to produce sirodesmin PL. The polypeptide is Nonribosomal peptide synthetase sirP (Leptosphaeria maculans (Blackleg fungus)).